A 434-amino-acid polypeptide reads, in one-letter code: uncharacterized protein (434 aa).

The first 17 residues, 1–17, serve as a signal peptide directing secretion; sequence MTFLLFQLLVLLRYSIG. A run of 12 helical transmembrane segments spans residues 48–68, 70–90, 112–132, 141–161, 173–193, 206–226, 232–252, 271–291, 305–325, 344–364, 380–400, and 404–424; these read AAIS…FTVL, EWVY…SVTA, YRVA…FTIF, TYGT…NAVV, WITG…RLVT, YGVH…TSFV, YCGL…LSGL, EGVY…HLGY, TSSI…TILF, WVLA…YIPL, ATFL…DTIF, and FSSL…IGTI.

It localises to the membrane. This is an uncharacterized protein from Arabidopsis thaliana (Mouse-ear cress).